Consider the following 169-residue polypeptide: MGLKYFSHLPEELRQKIVHDHLQQERKKEFLEKAIEDSCRRHVSLLKSDPSPSELYALSKFLDSLADYVGKQFNTRCLIKWKKDVPANIKFEVMEEQHLRLYGFVDMDDLLCREVLPPEEDDDITYEDGMIVNCSELDKLFEALGIKVVYITVSKNCICTPLNKDIVIS.

The interval 9–22 is binding to host SKP1 protein; that stretch reads LPEELRQKIVHDHL. The LXCXE motif, interaction with host RBR motif lies at 110–114; it reads LLCRE.

The protein belongs to the nanovirus Clink protein family. Interacts with host SKP1. Interacts (via LXCXE domain) with host retinoblastoma-related protein 1 (RBR1). Interacts (via LXCXE domain) with retinoblastoma-related proteins (RBR).

Its function is as follows. Interacts with and disrupts the function of host retinoblastoma-related proteins RBR, which are key regulators of the cell cycle. Induces transcriptional activation of E2F-regulated S-phase and G2/M-phase-specific genes. Inactivation of the ability of RBR to arrest the cell cycle leads to the stimulation of viral DNA replication. In Cicer arietinum (Chickpea), this protein is Cell cycle link protein (DNA-C).